The following is a 204-amino-acid chain: Methylthioribulose-1-phosphate dehydratase (204 aa).

Zn(2+)-binding residues include His95 and His97.

This sequence belongs to the aldolase class II family. MtnB subfamily. Zn(2+) is required as a cofactor.

It catalyses the reaction 5-(methylsulfanyl)-D-ribulose 1-phosphate = 5-methylsulfanyl-2,3-dioxopentyl phosphate + H2O. It participates in amino-acid biosynthesis; L-methionine biosynthesis via salvage pathway; L-methionine from S-methyl-5-thio-alpha-D-ribose 1-phosphate: step 2/6. Functionally, catalyzes the dehydration of methylthioribulose-1-phosphate (MTRu-1-P) into 2,3-diketo-5-methylthiopentyl-1-phosphate (DK-MTP-1-P). The protein is Methylthioribulose-1-phosphate dehydratase of Parvibaculum lavamentivorans (strain DS-1 / DSM 13023 / NCIMB 13966).